A 192-amino-acid chain; its full sequence is Immunoglobulin superfamily member 23 (192 aa).

The segment at 1–26 (MRAKPQSPLPRNPVPAWSPPTTTTDP) is disordered. Pro residues predominate over residues 7 to 18 (SPLPRNPVPAWS). The 109-residue stretch at 20-128 (PTTTTDPMLE…QLVSEPVTIS (109 aa)) folds into the Ig-like domain. A glycan (N-linked (GlcNAc...) asparagine) is linked at asparagine 64. The helical transmembrane segment at 158-178 (LLAAGILGAGALIAGMCFIII) threads the bilayer.

Expressed in bone and small intestine. Highly expressed in osteoclasts, and low expressed in osteoblasts and peripheral blood mononuclear cells (PBMCs).

It is found in the cell membrane. Functionally, may be involved in osteoclast differentiation. This Homo sapiens (Human) protein is Immunoglobulin superfamily member 23.